The sequence spans 148 residues: Ribonuclease pancreatic (148 aa).

Positions M1 to G25 are cleaved as a signal peptide. The substrate site is built by K32 and R35. H37 functions as the Proton acceptor in the catalytic mechanism. 4 cysteine pairs are disulfide-bonded: C50/C108, C64/C119, C82/C134, and C89/C96. N-linked (GlcNAc...) asparagine glycosylation occurs at N58. K65 to T69 serves as a coordination point for substrate. N-linked (GlcNAc...) asparagine glycosylation occurs at N86. Residues K90 and R109 each coordinate substrate. Catalysis depends on H143, which acts as the Proton donor.

Belongs to the pancreatic ribonuclease family. Monomer. Interacts with and forms tight 1:1 complexes with RNH1. Dimerization of two such complexes may occur. Interaction with RNH1 inhibits this protein. As to expression, pancreas.

The protein resides in the secreted. It catalyses the reaction an [RNA] containing cytidine + H2O = an [RNA]-3'-cytidine-3'-phosphate + a 5'-hydroxy-ribonucleotide-3'-[RNA].. The catalysed reaction is an [RNA] containing uridine + H2O = an [RNA]-3'-uridine-3'-phosphate + a 5'-hydroxy-ribonucleotide-3'-[RNA].. Endonuclease that catalyzes the cleavage of RNA on the 3' side of pyrimidine nucleotides. Acts on single-stranded and double-stranded RNA. This chain is Ribonuclease pancreatic (RNASE1), found in Myodes glareolus (Bank vole).